The chain runs to 419 residues: Phosphatidylinositol 5-phosphate 4-kinase type-2 gamma (419 aa).

Positions 46–418 constitute a PIPK domain; the sequence is ASDPLISVFM…RFLEFVTNIF (373 aa). The segment covering 299 to 310 has biased composition (acidic residues); sequence QEEEEDLEEDHT. Residues 299–320 form a disordered region; that stretch reads QEEEEDLEEDHTENESSPHMNV.

Post-translationally, phosphorylated, phosphorylation is induced by EGF.

The protein localises to the endoplasmic reticulum. Its subcellular location is the cytoplasm. The catalysed reaction is a 1,2-diacyl-sn-glycero-3-phospho-(1D-myo-inositol-5-phosphate) + ATP = a 1,2-diacyl-sn-glycero-3-phospho-(1D-myo-inositol-4,5-bisphosphate) + ADP + H(+). It catalyses the reaction 1,2-dihexadecanoyl-sn-glycero-3-phospho-(1D-myo-inositol-5-phosphate) + ATP = 1,2-dihexadecanoyl-sn-glycero-3-phospho-(1D-myo-inositol-4,5-bisphosphate) + ADP + H(+). The enzyme catalyses 1,2-dihexadecanoyl-sn-glycero-3-phospho-(1D-myo-inositol-5-phosphate) + GTP = 1,2-dihexadecanoyl-sn-glycero-3-phospho-(1D-myo-inositol-4,5-bisphosphate) + GDP + H(+). Its function is as follows. Phosphatidylinositol 5-phosphate 4-kinase with low enzymatic activity. May be a GTP sensor, has higher GTP-dependent kinase activity than ATP-dependent kinase activity. The sequence is that of Phosphatidylinositol 5-phosphate 4-kinase type-2 gamma (pip4k2c) from Xenopus tropicalis (Western clawed frog).